A 548-amino-acid polypeptide reads, in one-letter code: MADDHAAAADLVDGGRPEGDTHSREDGLSKPRDKDREREKDKDRERHRDRDRDRGRDRDRDKDKEKDRDKERDRDRDRDKDRDRHHRHHRERREHRDRSDDHDRHRSRDSERRRDHERDGRRRHRSRSRSRSRGRDRRSRSRSRSKSKRVSGFDMAPPAQAVVPQFPAIPTPSQFPGTAIPGMFPNMLPMGVGQFNPLVIQPQAMTQQATRHARRVYVGGLPPTANEQSVAIYFNQVMAAIGGNTAGPGDAVLNVYINHDKKFAFVEMRSVEEASNAMALDGILFEGAPVKVRRPTDYNPSLAAALGPSQPSPNLNLAAVGLTPGSAGGLEGPDRIFVGGLPYYFTEAQVRELLESFGPLRGFDLVKDRETGNSKGYAFCVYQDLNVTDIACAALNGIKMGDKTLTVRRANQGAAQPRPEQESILLQAQQQVQLQKLVYQVGALPTKVVCLTQVVSADELKDDEEYEDIMEDMRLEAGKYGNLIKVVIPRPDPSGLPVAGVGKVFLEYADVDGATKAKTAMHGRKFGGNPVVAVFYPENKFSSAEYDA.

The span at 1 to 82 (MADDHAAAAD…DRDRDRDKDR (82 aa)) shows a compositional bias: basic and acidic residues. Residues 1-156 (MADDHAAAAD…SKRVSGFDMA (156 aa)) form a disordered region. Over residues 83 to 93 (DRHHRHHRERR) the composition is skewed to basic residues. Positions 94–120 (EHRDRSDDHDRHRSRDSERRRDHERDG) are enriched in basic and acidic residues. Residues 121–149 (RRRHRSRSRSRSRGRDRRSRSRSRSKSKR) show a composition bias toward basic residues. RRM domains follow at residues 214–297 (RRVY…RPTD), 334–412 (DRIF…RANQ), and 453–539 (QVVS…YPEN).

Belongs to the splicing factor SR family.

Its subcellular location is the nucleus. In terms of biological role, necessary for the splicing of pre-mRNA. The sequence is that of Splicing factor U2af large subunit B (U2AF65B) from Oryza sativa subsp. japonica (Rice).